Here is a 618-residue protein sequence, read N- to C-terminus: Two-component response regulator-like APRR1 (618 aa).

The 119-residue stretch at 20–138 (RILLCDNDST…ELLNLWTHMW (119 aa)) folds into the Response regulatory domain. Composition is skewed to polar residues over residues 161–174 (SDQS…TNLF), 187–200 (NPQR…ENEW), 246–257 (RNSNPAQFSSAP), 324–334 (PKSTVLRTNGQ), and 375–389 (TEQY…QNGA). Disordered stretches follow at residues 161-200 (SDQS…ENEW), 239-260 (SHHE…PKKS), 316-338 (TKQA…DPPL), 368-395 (QAHR…PHSL), and 573-618 (VRKM…ALGT). One can recognise a CCT domain in the interval 533 to 575 (REEALLKFRRKRNQRCFDKKIRYVNRKRLAERRPRVKGQFVRK). A coiled-coil region spans residues 588–610 (DSADYDDEEEEEEEEEEENRDSS). Acidic residues predominate over residues 590 to 606 (ADYDDEEEEEEEEEEEN).

It belongs to the ARR-like family. As to quaternary structure, interacts with PIF1, PIL2, PIF3, PIF4, PIL5, PIL6, ABI3 (via C-terminus), ADO1/ZTL, ADO2, APRR3 and TCP21/CHE. Both the phosphorylated and the dephosphorylated forms interact with ADO1/ZLT. Post-translationally, phosphorylated; during the day. Phosphorylation is required for optimal interaction with APRR3. In terms of tissue distribution, expressed in leaves, flowers and siliques. Restricted to the vasculature.

It localises to the nucleus. Functionally, controls photoperiodic flowering response. Component of the circadian clock. Expression of several members of the ARR-like family is controlled by circadian rhythm. The particular coordinated sequential expression of APRR9, APRR7, APRR5, APRR3 and APPR1 result to circadian waves that may be at the basis of the endogenous circadian clock. Positive regulator of CCA1 and LHY expression. The chain is Two-component response regulator-like APRR1 (APRR1) from Arabidopsis thaliana (Mouse-ear cress).